Consider the following 234-residue polypeptide: Eukaryotic translation initiation factor 3 subunit K (234 aa).

One can recognise a PCI domain in the interval 46–219 (SDIEANLALL…EAKPATTTES (174 aa)).

Belongs to the eIF-3 subunit K family. Component of the eukaryotic translation initiation factor 3 (eIF-3) complex.

It localises to the cytoplasm. In terms of biological role, component of the eukaryotic translation initiation factor 3 (eIF-3) complex, which is involved in protein synthesis of a specialized repertoire of mRNAs and, together with other initiation factors, stimulates binding of mRNA and methionyl-tRNAi to the 40S ribosome. The eIF-3 complex specifically targets and initiates translation of a subset of mRNAs involved in cell proliferation. The chain is Eukaryotic translation initiation factor 3 subunit K from Yarrowia lipolytica (strain CLIB 122 / E 150) (Yeast).